A 1045-amino-acid polypeptide reads, in one-letter code: MNWPFFRTAAVLFIFLVVLEVNSEFRIQVRDYNTKNGTIKWHSIRRQKREWIKFAAACREGEDNSKRNPIAKIHSDCAANQQVTYRISGVGIDQPPYGIFVINQKTGEINITSIVDREVTPFFIIYCRALNAQGQDLERPLELRVRVLDINDNPPVFSMSTFLGQIEENSNANTLVMRLNATDADEPNNLNSKIAFKIIRQEPSDSPMFIINRYTGEIRTMNNFLDREQYSQYSLAVRGSDRDGGADGMSAECECSIKILDVNDNIPYMELPSNSLQIEENSLNSNLLQIRVIDLDEEFSANWLAVIFFISGNEGGWFDIEMNERTNVGTLKIVKPLDYEEVKNLQLSLGVRNKAEFHQSIMSQYKLTATAISVTVLNVIEGSVFRPGSKTYVVTSSMGQNYKLGEFIATDLDTGLPSTTVRYVMGNNPTDLLAIDSKTGIITLRNKVTREQYNLLGKKYQGTILSIDDALQRTCTGTINIDLEGSGWEDRQTDGAVTGGGTITSTNDFTPSYEYTTTNTEDVYSVTPTGNGVRVRHPLDNVHFGPAGIGLLIMGFLVLGLVPFLLMYCDCGGAPGGGAGFEPVPECSDGAIHSWAVEGAQPERADLTTICVPQVPPDNANIIECIDNSGVYTNEYCGREMQELGGGERTTGFELIDGGKISGAPEICQEHSGTLRRNSMRECREGGLNMNFMESYFCQKAYAYADEDEGRPSNDCLLIYDIEGEGSPAGSVGCCSFIGEDLDDSFLDTLGPKFKKLADISLGKETEPYPDPDPSWPPQSTDPICPPQGTEPIGSGHPPISPHIGTTTVISESTYPSGPGVHHPMPIPDPLSYGNVTMTESYTTSGILKPSVHVHDNRQASNVVVTERVVGPISGANLHGMLEMPDLRDGSNVIVTERVIAPNSSLPTTLTIPDPRESSNVVVTERVIRPTSGIVGNLSMHPDISNTHNVIVTERVVSGSGITGISGGSGMGSSGLVGSTAGVGGDGLGLSSLGGGGLSSGIGGTATIGHLRGSSEHHFSNTLGSASPTTTRSRITKYSTVQYTK.

The first 23 residues, 1-23 (MNWPFFRTAAVLFIFLVVLEVNS), serve as a signal peptide directing secretion. Residues 24–49 (EFRIQVRDYNTKNGTIKWHSIRRQKR) constitute a propeptide that is removed on maturation. 3 N-linked (GlcNAc...) asparagine glycosylation sites follow: asparagine 36, asparagine 110, and asparagine 180. Cadherin domains follow at residues 50–158 (EWIK…PVFS), 159–270 (MSTF…PYME), 271–385 (LPSN…GSVF), and 386–496 (RPGS…TDGA). The Extracellular segment spans residues 50–546 (EWIKFAAACR…HPLDNVHFGP (497 aa)). The chain crosses the membrane as a helical span at residues 547–567 (AGIGLLIMGFLVLGLVPFLLM). Over 568 to 1045 (YCDCGGAPGG…TKYSTVQYTK (478 aa)) the chain is Cytoplasmic. Desmoglein repeat repeat units lie at residues 814–840 (TYPS…TMTE), 841–870 (SYTT…ERVV), 871–900 (GPIS…ERVI), 901–928 (APNS…ERVI), and 929–957 (RPTS…ERVV). The segment at 1019-1045 (FSNTLGSASPTTTRSRITKYSTVQYTK) is disordered. A compositionally biased stretch (polar residues) spans 1020 to 1045 (SNTLGSASPTTTRSRITKYSTVQYTK).

In terms of assembly, binds to JUP/plakoglobin. Interacts with PKP2. Interacts with DSC3; there is evidence to suggest that the interaction promotes cell-cell adhesion of keratinocytes.

It is found in the cell membrane. The protein localises to the cell junction. The protein resides in the desmosome. It localises to the cytoplasm. Its subcellular location is the nucleus. Component of intercellular desmosome junctions. Involved in the interaction of plaque proteins and intermediate filaments mediating cell-cell adhesion. In Sus scrofa (Pig), this protein is Desmoglein-1 (DSG1).